A 157-amino-acid chain; its full sequence is Fimbrial protein Q (157 aa).

A propeptide spanning residues 1 to 6 is cleaved from the precursor; the sequence is MNAQKG. F7 bears the N-methylphenylalanine mark. Cysteines 136 and 155 form a disulfide.

The protein belongs to the N-Me-Phe pilin family. In terms of assembly, the pili are polar flexible filaments of about 5.4 nanometers diameter and 2.5 micrometers average length; they consist of only a single polypeptide chain arranged in a helical configuration of five subunits per turn in the assembled pilus.

Its subcellular location is the fimbrium. This chain is Fimbrial protein Q (tfpQ), found in Moraxella bovis.